Reading from the N-terminus, the 187-residue chain is Elongation factor P (187 aa).

It belongs to the elongation factor P family.

The protein localises to the cytoplasm. Its pathway is protein biosynthesis; polypeptide chain elongation. Functionally, involved in peptide bond synthesis. Stimulates efficient translation and peptide-bond synthesis on native or reconstituted 70S ribosomes in vitro. Probably functions indirectly by altering the affinity of the ribosome for aminoacyl-tRNA, thus increasing their reactivity as acceptors for peptidyl transferase. The sequence is that of Elongation factor P from Mycolicibacterium vanbaalenii (strain DSM 7251 / JCM 13017 / BCRC 16820 / KCTC 9966 / NRRL B-24157 / PYR-1) (Mycobacterium vanbaalenii).